Consider the following 137-residue polypeptide: Large ribosomal subunit protein uL16 (137 aa).

The protein belongs to the universal ribosomal protein uL16 family. Part of the 50S ribosomal subunit.

Functionally, binds 23S rRNA and is also seen to make contacts with the A and possibly P site tRNAs. This chain is Large ribosomal subunit protein uL16, found in Nitratidesulfovibrio vulgaris (strain ATCC 29579 / DSM 644 / CCUG 34227 / NCIMB 8303 / VKM B-1760 / Hildenborough) (Desulfovibrio vulgaris).